Reading from the N-terminus, the 493-residue chain is 6-aminohexanoate-cyclic-dimer hydrolase (493 aa).

Active-site charge relay system residues include Lys72 and Ser150. The active-site Acyl-ester intermediate is Ser174.

This sequence belongs to the amidase family. As to quaternary structure, homodimer.

It catalyses the reaction 1,8-diazacyclotetradecane-2,9-dione + H2O = N-(6-aminohexanoyl)-6-aminohexanoate. It participates in xenobiotic degradation; nylon-6 oligomer degradation. With respect to regulation, strongly inhibited by 1 uM diisopropylphosphofluoridate and 10 uM p-chloromercuribenzoate but scarcely inhibited by 100 mM EDTA in vitro. Functionally, specifically catalyzes the hydrolysis of 6-aminohexanoic acid cyclic dimer (1,8-diazacyclotetradecane-2,9-dione) to form the linear dimer 6-aminohexanoyl-6-aminohexanoic acid. Is inactive on 6-aminohexanoic acid oligomers (degree of polymerization 2 to 6), various other cyclic amides, cyclic diamides, linear amides, oligopeptides, and casein. Allows the bacterium to grow on a medium containing 6-aminohexanoic acid cyclic dimer as the sole carbon and nitrogen sources. The polypeptide is 6-aminohexanoate-cyclic-dimer hydrolase (nylA) (Paenarthrobacter ureafaciens).